The chain runs to 353 residues: Tetrahedral aminopeptidase (353 aa).

Positions 68 and 182 each coordinate Zn(2+). Glu-212 functions as the Proton acceptor in the catalytic mechanism. Glu-213, Asp-235, and His-323 together coordinate Zn(2+).

This sequence belongs to the peptidase M42 family. As to quaternary structure, homododecamer. The assembly of six dimers results in a tetrahedral-shaped structure; all 12 active sites are located on the inside of the tetrahedron. Substrate access is granted by four pores with a maximal diameter of 18 Angstroms, allowing only small peptides and unfolded proteins access to the active site. Beside the four entry ports, TET contains 12 small product release openings, which are large enough to allow passage of only single amino acid residues. Zn(2+) serves as cofactor. Requires Co(2+) as cofactor.

With respect to regulation, inhibited by EDTA and bestatin in vitro. Is insensitive to papain, antipain, chymostatin, leupeptin, pepstatin and aprotinin. Functionally, functions as an aminopeptidase, with a clear preference for leucine as the N-terminal amino acid. However, can also cleave moderately long polypeptide substrates of various compositions in a fairly unspecific manner. Has neither carboxypeptidase nor endoproteolytic activities, and it is devoid of N-terminal deblocking activity. Is involved in protein degradation, performing degradation of oligopeptides produced by the proteasome into single amino acids. In Pyrococcus horikoshii (strain ATCC 700860 / DSM 12428 / JCM 9974 / NBRC 100139 / OT-3), this protein is Tetrahedral aminopeptidase (frvX).